Reading from the N-terminus, the 773-residue chain is Protein FAM149A (773 aa).

2 stretches are compositionally biased toward low complexity: residues 18–37 and 54–90; these read TSTA…AAAA and LLRA…AAGA. 4 disordered regions span residues 18 to 155, 173 to 210, 232 to 264, and 568 to 613; these read TSTA…RELG, DIGE…DSLP, FSSS…TERG, and TQNE…PWRL. Acidic residues predominate over residues 174-186; the sequence is IGEEGASDGDSGD. The span at 245-264 shows a compositional bias: low complexity; it reads TSWSGSATQSSTTGSSTERG.

Belongs to the FAM149 family.

The protein is Protein FAM149A (FAM149A) of Homo sapiens (Human).